Consider the following 376-residue polypeptide: tRNA-specific 2-thiouridylase MnmA (376 aa).

ATP-binding positions include 14 to 21 (GMSGGVDS) and Met-40. The segment at 100 to 102 (NPD) is interaction with target base in tRNA. The Nucleophile role is filled by Cys-105. Cysteines 105 and 202 form a disulfide. Gly-129 contributes to the ATP binding site. Residues 152–154 (KDQ) are interaction with tRNA. Catalysis depends on Cys-202, which acts as the Cysteine persulfide intermediate. The tract at residues 315–316 (RY) is interaction with tRNA.

This sequence belongs to the MnmA/TRMU family.

The protein localises to the cytoplasm. The enzyme catalyses S-sulfanyl-L-cysteinyl-[protein] + uridine(34) in tRNA + AH2 + ATP = 2-thiouridine(34) in tRNA + L-cysteinyl-[protein] + A + AMP + diphosphate + H(+). Catalyzes the 2-thiolation of uridine at the wobble position (U34) of tRNA, leading to the formation of s(2)U34. The sequence is that of tRNA-specific 2-thiouridylase MnmA from Lactococcus lactis subsp. cremoris (strain MG1363).